The following is a 318-amino-acid chain: Acetyl-coenzyme A carboxylase carboxyl transferase subunit beta (318 aa).

A CoA carboxyltransferase N-terminal domain is found at Leu-25 to Ala-294. Residues Cys-29, Cys-32, Cys-48, and Cys-51 each coordinate Zn(2+). The C4-type zinc-finger motif lies at Cys-29–Cys-51. Residues Val-286–Asp-318 are disordered.

The protein belongs to the AccD/PCCB family. As to quaternary structure, acetyl-CoA carboxylase is a heterohexamer composed of biotin carboxyl carrier protein (AccB), biotin carboxylase (AccC) and two subunits each of ACCase subunit alpha (AccA) and ACCase subunit beta (AccD). It depends on Zn(2+) as a cofactor.

It is found in the cytoplasm. The enzyme catalyses N(6)-carboxybiotinyl-L-lysyl-[protein] + acetyl-CoA = N(6)-biotinyl-L-lysyl-[protein] + malonyl-CoA. Its pathway is lipid metabolism; malonyl-CoA biosynthesis; malonyl-CoA from acetyl-CoA: step 1/1. Component of the acetyl coenzyme A carboxylase (ACC) complex. Biotin carboxylase (BC) catalyzes the carboxylation of biotin on its carrier protein (BCCP) and then the CO(2) group is transferred by the transcarboxylase to acetyl-CoA to form malonyl-CoA. This chain is Acetyl-coenzyme A carboxylase carboxyl transferase subunit beta, found in Jannaschia sp. (strain CCS1).